The chain runs to 548 residues: MAAPPASMSAAPSPLQSAVAPDVPGRQAEQNETACEDRSNAGTLDRLLPPVGTGRSPRKRTTSQCKSEPPLLRTSKRTIYTAGRPPWYNEHGTQSKEAFAIGLGGGSASGKTTVARMIIEALDVPWVVLLSMDSFYKVLTQQQQEQAACNNFNFDHPDAFDFDLIISTLKKLKQGRSVQVPIYDFTTHSRKKDWKTLYGANVIIFEGIMAFADKTLLELLDMKIFVDTDSDIRLVRRLRRDISERGRDIEGVIKQYNKFVKPAFDQYIQPTMRLADIVVPRGSGNTVAIDLIVQHVHSQLEERELSVRAALASAHQCHPLPQTLSVLKSTPQVRGMHTIIRDKETSRDEFIFYSKRLMRLLIEHALSFLPFQDCTVQTPQGQDYVGKCYAGKQITGVSILRAGETMEPALRAVCKDVRIGTILIQTNQLTGEPELHYLRLPKDISDDHVILMDCTVSTGAAAMMAVRVLLDHDVPEDKIFLLSLLMAEMGVHSVAYAFPRVRIITTAVDKRVNDLFRIIPGIGNFGDRYFGTDAVPDGSDDDEAATVG.

The segment covering 1–18 has biased composition (low complexity); that stretch reads MAAPPASMSAAPSPLQSA. A disordered region spans residues 1 to 74; that stretch reads MAAPPASMSA…CKSEPPLLRT (74 aa). Phosphoserine is present on residues S56 and S63. Position 105-112 (105-112) interacts with ATP; that stretch reads GGSASGKT. A Phosphoserine modification is found at S539.

This sequence belongs to the uridine kinase family. In terms of assembly, interacts with RNF19B. Ubiquitinated by RNF19B; which induces proteasomal degradation.

The protein resides in the cytoplasm. It is found in the nucleus. The catalysed reaction is uridine + ATP = UMP + ADP + H(+). It carries out the reaction cytidine + ATP = CMP + ADP + H(+). Its pathway is pyrimidine metabolism; UMP biosynthesis via salvage pathway; UMP from uridine: step 1/1. May contribute to UTP accumulation needed for blast transformation and proliferation. The chain is Uridine-cytidine kinase-like 1 (Uckl1) from Mus musculus (Mouse).